Reading from the N-terminus, the 249-residue chain is 5'-nucleotidase SurE (249 aa).

Residues Asp-9, Asp-10, Ser-40, and Asn-92 each coordinate a divalent metal cation.

Belongs to the SurE nucleotidase family. The cofactor is a divalent metal cation.

It localises to the cytoplasm. The catalysed reaction is a ribonucleoside 5'-phosphate + H2O = a ribonucleoside + phosphate. Its function is as follows. Nucleotidase that shows phosphatase activity on nucleoside 5'-monophosphates. The sequence is that of 5'-nucleotidase SurE from Shewanella baltica (strain OS223).